Here is a 366-residue protein sequence, read N- to C-terminus: GTP-binding protein 10 (366 aa).

In terms of domain architecture, Obg spans 13-148 (GNFIDNLRIF…RIVHLDLKVI (136 aa)). An OBG-type G domain is found at 149 to 344 (ADVGLVGFPN…LKSCIRKALD (196 aa)). Residues 155-162 (GFPNAGKS), 202-206 (DLPGL), and 278-281 (NKMD) contribute to the GTP site. Residues 346-355 (QDGKESDAHR) show a composition bias toward basic and acidic residues. The segment at 346-366 (QDGKESDAHRSKQLLNLQSSS) is disordered.

It belongs to the TRAFAC class OBG-HflX-like GTPase superfamily. OBG GTPase family.

It localises to the nucleus. The protein localises to the nucleolus. May be involved in the ribosome maturation process. The protein is GTP-binding protein 10 (Gtpbp10) of Mus musculus (Mouse).